Reading from the N-terminus, the 370-residue chain is Queuine tRNA-ribosyltransferase (370 aa).

D93 (proton acceptor) is an active-site residue. Residues 93-97, D147, Q189, and G216 each bind substrate; that span reads DSGGF. The RNA binding stretch occupies residues 247–253; it reads GVGSPDC. Catalysis depends on D266, which acts as the Nucleophile. The segment at 271–275 is RNA binding; important for wobble base 34 recognition; sequence TRIAR. Positions 304, 306, 309, and 335 each coordinate Zn(2+).

This sequence belongs to the queuine tRNA-ribosyltransferase family. In terms of assembly, homodimer. Within each dimer, one monomer is responsible for RNA recognition and catalysis, while the other monomer binds to the replacement base PreQ1. Zn(2+) is required as a cofactor.

The enzyme catalyses 7-aminomethyl-7-carbaguanine + guanosine(34) in tRNA = 7-aminomethyl-7-carbaguanosine(34) in tRNA + guanine. The protein operates within tRNA modification; tRNA-queuosine biosynthesis. Catalyzes the base-exchange of a guanine (G) residue with the queuine precursor 7-aminomethyl-7-deazaguanine (PreQ1) at position 34 (anticodon wobble position) in tRNAs with GU(N) anticodons (tRNA-Asp, -Asn, -His and -Tyr). Catalysis occurs through a double-displacement mechanism. The nucleophile active site attacks the C1' of nucleotide 34 to detach the guanine base from the RNA, forming a covalent enzyme-RNA intermediate. The proton acceptor active site deprotonates the incoming PreQ1, allowing a nucleophilic attack on the C1' of the ribose to form the product. After dissociation, two additional enzymatic reactions on the tRNA convert PreQ1 to queuine (Q), resulting in the hypermodified nucleoside queuosine (7-(((4,5-cis-dihydroxy-2-cyclopenten-1-yl)amino)methyl)-7-deazaguanosine). The polypeptide is Queuine tRNA-ribosyltransferase (Desulforamulus reducens (strain ATCC BAA-1160 / DSM 100696 / MI-1) (Desulfotomaculum reducens)).